We begin with the raw amino-acid sequence, 711 residues long: Far upstream element-binding protein 2 (711 aa).

The tract at residues 1–147 (MSDYSTGGPP…HPPPRTSMTE (147 aa)) is disordered. Serine 2 carries the post-translational modification N-acetylserine. A compositionally biased stretch (pro residues) spans 8–17 (GPPPGPPPPA). Composition is skewed to gly residues over residues 18–28 (GGGGGAGGAGG) and 36–68 (GAGDRGGGGPGGGGPGGGSAGGPSQPPGGGGPG). Arginine 40 bears the Omega-N-methylarginine mark. N6-acetyllysine is present on lysine 87. Serine 99 is subject to Phosphoserine. Threonine 100 carries the phosphothreonine modification. A compositionally biased stretch (basic and acidic residues) spans 110–122 (RQLEDGDQPESKK). Residue lysine 121 forms a Glycyl lysine isopeptide (Lys-Gly) (interchain with G-Cter in SUMO1); alternate linkage. Lysine 121 participates in a covalent cross-link: Glycyl lysine isopeptide (Lys-Gly) (interchain with G-Cter in SUMO2); alternate. Phosphoserine occurs at positions 125, 129, 131, 181, 184, 193, and 274. 3 consecutive KH domains span residues 144–208 (SMTE…KMML), 233–299 (GTVQ…CEMV), and 322–386 (GGGI…ARII). Positions 392-429 (SLRSGPPGPPGGPGMPPGGRGRGRGQGNWGPPGGEMTF) are disordered. Over residues 397–407 (PPGPPGGPGMP) the composition is skewed to pro residues. A compositionally biased stretch (gly residues) spans 408-424 (PGGRGRGRGQGNWGPPG). Omega-N-methylarginine occurs at positions 411, 413, 415, and 442. The 68-residue stretch at 424 to 491 (GGEMTFSIPT…QQIDHAKQLI (68 aa)) folds into the KH 4 domain. Residue serine 480 is modified to Phosphoserine. The interval 497–569 (GPLCPVGPGP…HDPSKAAAAA (73 aa)) is disordered. 2 stretches are compositionally biased toward pro residues: residues 501–520 (PVGPGPGGPGPAGPMGPFNP) and 528–542 (PGAPPHAGGPPPHQY). Repeat 1 spans residues 571-582 (DPNAAWAAYYSH). The interval 571-684 (DPNAAWAAYY…SAAWAEYYRQ (114 aa)) is 4 X 12 AA imperfect repeats. A disordered region spans residues 583–711 (YYQQPPGPVP…PTQQGQQQAQ (129 aa)). Pro residues predominate over residues 587–613 (PPGPVPGPAPAPAAPPAQGEPPQPPPT). Tandem repeats lie at residues 617–628 (DYTKAWEEYYKK), 643–654 (DYTKAWEEYYKK), and 673–684 (DYSAAWAEYYRQ).

This sequence belongs to the KHSRP family. Part of a ternary complex containing FUBP2, PTBP1, PTBP2 and HNRPH1. Interacts with PARN. Interacts with PQBP1. Phosphorylation at Ser-193 leads to the unfolding of the unstable KH domain 1, creating a site for 14-3-3 YWHAZ binding, which promotes nuclear localization and impairs the RNA degradation function. As to expression, detected in neural and non-neural cell lines.

Its subcellular location is the nucleus. It localises to the cytoplasm. Functionally, binds to the dendritic targeting element and may play a role in mRNA trafficking. Part of a ternary complex that binds to the downstream control sequence (DCS) of the pre-mRNA. Mediates exon inclusion in transcripts that are subject to tissue-specific alternative splicing. May interact with single-stranded DNA from the far-upstream element (FUSE). May activate gene expression. Also involved in degradation of inherently unstable mRNAs that contain AU-rich elements (AREs) in their 3'-UTR, possibly by recruiting degradation machinery to ARE-containing mRNAs. The polypeptide is Far upstream element-binding protein 2 (KHSRP) (Homo sapiens (Human)).